The chain runs to 189 residues: Cell division protein SepF (189 aa).

Polar residues predominate over residues 152–163 (FQEEPSPSSVMN). The disordered stretch occupies residues 152–189 (FQEEPSPSSVMNKDNEGPVSESVMAPEPAWGASVPSAI).

The protein belongs to the SepF family. In terms of assembly, homodimer. Interacts with FtsZ.

Its subcellular location is the cytoplasm. Cell division protein that is part of the divisome complex and is recruited early to the Z-ring. Probably stimulates Z-ring formation, perhaps through the cross-linking of FtsZ protofilaments. Its function overlaps with FtsA. The chain is Cell division protein SepF from Prochlorococcus marinus (strain SARG / CCMP1375 / SS120).